Consider the following 110-residue polypeptide: Large ribosomal subunit protein bL20 (110 aa).

Belongs to the bacterial ribosomal protein bL20 family.

Its function is as follows. Binds directly to 23S ribosomal RNA and is necessary for the in vitro assembly process of the 50S ribosomal subunit. It is not involved in the protein synthesizing functions of that subunit. This Shigella boydii serotype 4 (strain Sb227) protein is Large ribosomal subunit protein bL20.